The sequence spans 192 residues: Phosphomevalonate kinase (192 aa).

ATP-binding positions include 17-23 (KRKSGKD) and arginine 141. Substrate is bound at residue asparagine 170. Residues histidine 171 and glutamine 180 each coordinate ATP.

As to quaternary structure, monomer.

The protein resides in the cytoplasm. Its subcellular location is the cytosol. It catalyses the reaction (R)-5-phosphomevalonate + ATP = (R)-5-diphosphomevalonate + ADP. It functions in the pathway isoprenoid biosynthesis; isopentenyl diphosphate biosynthesis via mevalonate pathway; isopentenyl diphosphate from (R)-mevalonate: step 2/3. In terms of biological role, catalyzes the reversible ATP-dependent phosphorylation of mevalonate 5-phosphate to produce mevalonate diphosphate and ADP, a key step in the mevalonic acid mediated biosynthesis of isopentenyl diphosphate and other polyisoprenoid metabolites. The sequence is that of Phosphomevalonate kinase (PMVK) from Bos taurus (Bovine).